The chain runs to 185 residues: uncharacterized protein (185 aa).

Residues 1 to 56 (MSSFTIPSPSSFSLSNSYNQTSPHSFTLRNSRSNFEFHRLRLDVESRRRSTSLRSN) constitute a chloroplast transit peptide. Residues 48–67 (RRSTSLRSNCSTKGTDSGEN) are disordered. Polar residues predominate over residues 52–64 (SLRSNCSTKGTDS). Positions 105 to 138 (QAEQQKQVQEIQEEVLERAKKAKERAARETMEEQ) form a coiled coil.

It localises to the plastid. The protein localises to the chloroplast. Its subcellular location is the plastoglobule. This is an uncharacterized protein from Arabidopsis thaliana (Mouse-ear cress).